Here is a 525-residue protein sequence, read N- to C-terminus: Ent-kaurene oxidase (525 aa).

The helical transmembrane segment at 31 to 51 threads the bilayer; it reads VHWLIYVAFGAWLCSYVIHVL. Residue cysteine 466 coordinates heme.

This sequence belongs to the cytochrome P450 family. The cofactor is heme.

It is found in the membrane. The catalysed reaction is ent-kaur-16-ene + 3 reduced [NADPH--hemoprotein reductase] + 3 O2 = ent-kaur-16-en-19-oate + 3 oxidized [NADPH--hemoprotein reductase] + 4 H2O + 4 H(+). It functions in the pathway plant hormone biosynthesis; gibberellin biosynthesis. Catalyzes three successive oxidations of the 4-methyl group of ent-kaurene giving kaurenoic acid, a key step in gibberellin (GA) biosynthesis. In Gibberella intermedia (Bulb rot disease fungus), this protein is Ent-kaurene oxidase (CYP503A1).